A 762-amino-acid chain; its full sequence is Semaphorin-4A (762 aa).

Positions 1–32 (MALPALGLDSWSFLGLFLFQLLLLFLPPATTA) are cleaved as a signal peptide. Over 33 to 684 (GREGQGPTPR…LAAPKSYWPH (652 aa)) the chain is Extracellular. A Sema domain is found at 37-495 (QGPTPRVKYH…FSGGIWKVPR (459 aa)). Residues Cys-114 and Cys-125 are joined by a disulfide bond. N-linked (GlcNAc...) asparagine glycosylation is found at Asn-121 and Asn-136. 3 disulfide bridges follow: Cys-143/Cys-152, Cys-270/Cys-380, and Cys-294/Cys-340. 2 N-linked (GlcNAc...) asparagine glycosylation sites follow: Asn-314 and Asn-497. Positions 497 to 544 (NCSVYESCMDCVLARDPHCAWDPESQTCRLLPTPILKSWKQDMQQGNP) constitute a PSI domain. Cystine bridges form between Cys-498–Cys-515 and Cys-507–Cys-524. The region spanning 574 to 632 (NSILELPCPQSSALASYHWSHGVEAIPEAPSTVYNGSLLLLLRDGAGGLYQCWATENDF) is the Ig-like C2-type domain. Asn-608 is a glycosylation site (N-linked (GlcNAc...) asparagine). The helical transmembrane segment at 685 to 705 (FLTVTVLLALVLSGALVTFLV) threads the bilayer. At 706-762 (SPLGALRARGKVQGCGTLPSREKAPLSSEQCLQPSKEGRTSASDMDADNNLQGTEVA) the chain is on the cytoplasmic side. The interval 722 to 762 (TLPSREKAPLSSEQCLQPSKEGRTSASDMDADNNLQGTEVA) is disordered.

The protein belongs to the semaphorin family. Interacts with PLXNB1, PLXNB2, PLXNB3, PLXND1 and TIMD2.

Its subcellular location is the cell membrane. Functionally, cell surface receptor for PLXNB1, PLXNB2, PLXNB3 and PLXND1 that plays an important role in cell-cell signaling. Regulates glutamatergic and GABAergic synapse development. Promotes the development of inhibitory synapses in a PLXNB1-dependent manner and promotes the development of excitatory synapses in a PLXNB2-dependent manner. Plays a role in priming antigen-specific T-cells, promotes differentiation of Th1 T-helper cells, and thereby contributes to adaptive immunity. Promotes phosphorylation of TIMD2. Inhibits angiogenesis. Promotes axon growth cone collapse. Inhibits axonal extension by providing local signals to specify territories inaccessible for growing axons. The protein is Semaphorin-4A (SEMA4A) of Bos taurus (Bovine).